We begin with the raw amino-acid sequence, 243 residues long: Transmembrane protein 174 (243 aa).

Helical transmembrane passes span 40–60 and 73–93; these read LLFS…MGWI and LLGP…VCKF.

As to quaternary structure, interacts with SLC34A1; regulates SLC34A1 internalization by PTH and FGF23. In terms of tissue distribution, kidney specific. Expressed in renal primary proximal tubule cells.

The protein resides in the endoplasmic reticulum membrane. It is found in the apical cell membrane. In terms of biological role, regulator of plasma phosphate homeostasis. Decreases serum inorganic phosphate (Pi) uptake by regulating the sodium-phosphate cotransporter SLC34A1 trafficking by PTH and FGF23 in the kidney. The chain is Transmembrane protein 174 (Tmem174) from Mus musculus (Mouse).